A 538-amino-acid chain; its full sequence is MVRLATFNDNVQVVHIGHLFRNSGHKEWRIFVWFNPMQERKWTRFTHLPLLSRAKVVNSTTKQINKADRVIEFEASDLQRAKIIDFPNLSSFASVRNKDGAQSSFIYEAETPYSKTRYHIPQLELARSLFLINSYFCRSCLSSTALQQEFDVQYEVERDHLEIRILPSSSFPKGALEQSAVVQLLVWLFSDQDVMDSYESIFRHYQQNREIKNGVESWCFSFDPPPMQGWKLHVKGRSSNEDKDYLVEEIVGLEINAMLPSTTAISHASFQEKEAGDGSTQHIAVSTESVVDDEHLQLDDEETANIDTDTRVIEAEPTWISFSRPSRIEKSRRARKSSQTILEKEEATTSENSNLVSTDEPHLGGVLAAADVGGKQDATNYNSIFANRFAAFDELLSILKTKFACRVLFEETLVLPKVGRSRLHLCKDGSPRVIKAVGVQRNGSEFVLLEVDASDGVKMLSTKVLSGVDSETWRNDFEKIRRGVVKSSLNWPNSLFDQLYGQDGHRGVNHPKGLGELQVSREDMEGWAERVVREQFTH.

The segment at residues 311–330 is a DNA-binding region (H-T-H motif); that stretch reads RVIEAEPTWISFSRPSRIEK. The disordered stretch occupies residues 330 to 360; that stretch reads KSRRARKSSQTILEKEEATTSENSNLVSTDE.

In terms of biological role, tnsABC + TnsD promote high-frequency insertion of Tn7 into a specific target site known as att-Tn7 whereas TnsABC + TnsE promote low-frequency insertion into many different sites. The polypeptide is Transposon Tn7 transposition protein TnsE (tnsE) (Escherichia coli).